The following is a 148-amino-acid chain: Protein RESISTANCE TO POWDERY MILDEW 8.1 (148 aa).

The RPW8 domain occupies Met1–Ala148. Residues Ala7–Phe23 form a helical membrane-spanning segment. Residues Asp120–Ile140 are a coiled coil.

It belongs to the plant RPW8 protein family.

It localises to the membrane. Functionally, disease resistance (R) protein that induces localized, salicylic acid-dependent defenses. Confers resistance to powdery mildew (e.g. Erysiphe cichoracearum UCSC1). The protein is Protein RESISTANCE TO POWDERY MILDEW 8.1 of Arabidopsis thaliana (Mouse-ear cress).